The primary structure comprises 241 residues: Neuromodulin (241 aa).

Over residues 1–26 the composition is skewed to basic and acidic residues; the sequence is TKQVEKNEDGDQKIEQDGIKPEDKAH. Positions 1–241 are disordered; it reads TKQVEKNEDG…EESKADQENA (241 aa). The IQ domain occupies 25–54; it reads AHKAATKIQASFRGHITRKKLKGEKKGDAP. Low complexity-rich tracts occupy residues 80–95 and 118–131; these read APAA…AQQE and SEQP…PAAS. Composition is skewed to basic and acidic residues over residues 132-147 and 159-171; these read SEEK…REST and KADE…EPKQ. Positions 172–198 are enriched in low complexity; the sequence is ADVPAADTTATTTPAAEDATAKATAQP. 2 stretches are compositionally biased toward basic and acidic residues: residues 208–220 and 232–241; these read TEEK…ETKP and EESKADQENA.

This sequence belongs to the neuromodulin family. Binds calmodulin with a greater affinity in the absence of Ca(2+) than in its presence. Palmitoylated. Palmitoylation is essential for plasma membrane association.

The protein resides in the cell membrane. Its subcellular location is the cell projection. The protein localises to the growth cone membrane. It is found in the synapse. It localises to the filopodium membrane. This protein is associated with nerve growth. It is a major component of the motile 'growth cones' that form the tips of elongating axons. Plays a role in axonal and dendritic filopodia induction. The protein is Neuromodulin (GAP43) of Serinus canaria (Island canary).